Reading from the N-terminus, the 261-residue chain is Hydroxyethylthiazole kinase (261 aa).

Residue methionine 40 coordinates substrate. ATP is bound by residues lysine 116 and threonine 162. Glycine 189 is a binding site for substrate.

Belongs to the Thz kinase family. Requires Mg(2+) as cofactor.

The enzyme catalyses 5-(2-hydroxyethyl)-4-methylthiazole + ATP = 4-methyl-5-(2-phosphooxyethyl)-thiazole + ADP + H(+). The protein operates within cofactor biosynthesis; thiamine diphosphate biosynthesis; 4-methyl-5-(2-phosphoethyl)-thiazole from 5-(2-hydroxyethyl)-4-methylthiazole: step 1/1. In terms of biological role, catalyzes the phosphorylation of the hydroxyl group of 4-methyl-5-beta-hydroxyethylthiazole (THZ). In Methanosarcina acetivorans (strain ATCC 35395 / DSM 2834 / JCM 12185 / C2A), this protein is Hydroxyethylthiazole kinase.